The primary structure comprises 540 residues: Protein dml-1 (540 aa).

Positions 517-540 are disordered; it reads NELAEMADEYHEGWSSGSDDGDDD.

It belongs to the misato family.

The protein localises to the mitochondrion. Involved in the partitioning of the mitochondrial organelle and mitochondrial DNA (mtDNA) inheritance. This Neurospora crassa (strain ATCC 24698 / 74-OR23-1A / CBS 708.71 / DSM 1257 / FGSC 987) protein is Protein dml-1 (dml-1).